We begin with the raw amino-acid sequence, 931 residues long: Dual serine/threonine and tyrosine protein kinase (931 aa).

The segment at 1 to 24 (MEGDAPQRVSERVSGPGPGGGGGG) is disordered. Residues 397-424 (RKKENELYESLMNIANRKQEEMKDMICE) adopt a coiled-coil conformation. The 255-residue stretch at 654–908 (PKLGQELGRG…PLLGIVQPML (255 aa)) folds into the Protein kinase domain. ATP is bound by residues 660–668 (LGRGQYGVV) and Lys-683. Catalysis depends on Asp-779, which acts as the Proton acceptor.

This sequence belongs to the protein kinase superfamily. Ser/Thr protein kinase family.

The protein localises to the cytoplasm. It localises to the cell membrane. The protein resides in the apical cell membrane. It is found in the basolateral cell membrane. Its subcellular location is the cell junction. It carries out the reaction L-seryl-[protein] + ATP = O-phospho-L-seryl-[protein] + ADP + H(+). The enzyme catalyses L-threonyl-[protein] + ATP = O-phospho-L-threonyl-[protein] + ADP + H(+). The catalysed reaction is L-tyrosyl-[protein] + ATP = O-phospho-L-tyrosyl-[protein] + ADP + H(+). In terms of biological role, acts as a positive regulator of ERK phosphorylation downstream of fibroblast growth factor-receptor activation. Involved in the regulation of both caspase-dependent apoptosis and caspase-independent cell death. In the skin, it plays a predominant role in suppressing caspase-dependent apoptosis in response to UV stress in a range of dermal cell types. This chain is Dual serine/threonine and tyrosine protein kinase (DSTYK), found in Canis lupus familiaris (Dog).